A 465-amino-acid polypeptide reads, in one-letter code: E3 ubiquitin-protein ligase parkin (465 aa).

A Ubiquitin-like domain is found at 1-76; the sequence is MIVFVRFNSS…VHIVQRPWRK (76 aa). Phosphoserine; by PINK1 is present on serine 65. Residues 77 to 99 form a disordered region; it reads GQEMNATGGDDPRNAAGGCEREP. Residues 77–237 form a necessary for PINK1-dependent localization to mitochondria region; the sequence is GQEMNATGGD…LIATNSRNIT (161 aa). Residues 141 to 225 form an RING-type 0; atypical zinc finger; it reads SIYNSFYVYC…PTSDKETSVA (85 aa). Threonine 175 carries the post-translational modification Phosphothreonine; by PINK1. An SYT11 binding 1 region spans residues 204 to 238; that stretch reads TSAEFFFKCGAHPTSDKETSVALHLIATNSRNITC. Threonine 217 bears the Phosphothreonine mark. A TRIAD supradomain region spans residues 234-465; that stretch reads RNITCITCTD…VCMGDHWFDV (232 aa). The Zn(2+) site is built by cysteine 238, cysteine 241, cysteine 253, histidine 257, cysteine 260, cysteine 263, cysteine 289, cysteine 293, cysteine 332, and cysteine 337. The RING-type 1 zinc-finger motif lies at 238–293; sequence CITCTDVRSPVLVFQCNSRHVICLDCFHLYCVTRLNDRQFVHDPQLGYSLPCVAGC. Residues 257-293 are SYT11 binding 2; that stretch reads HVICLDCFHLYCVTRLNDRQFVHDPQLGYSLPCVAGC. The IBR-type zinc finger occupies 313-377; the sequence is NRYQQYGAEE…CKEAYHEGEC (65 aa). Lysine 349 participates in a covalent cross-link: Glycyl lysine isopeptide (Lys-Gly) (interchain with G-Cter in ISG15). Positions 352, 360, 365, and 368 each coordinate Zn(2+). A Glycyl lysine isopeptide (Lys-Gly) (interchain with G-Cter in ISG15) cross-link involves residue lysine 369. Histidine 373 and cysteine 377 together coordinate Zn(2+). Residues 378–410 form an REP region; sequence SAVFEASGTTTQAYRVDERAAEQARWEAASKET. 2 residues coordinate Zn(2+): cysteine 418 and cysteine 421. An RING-type 2; atypical zinc finger spans residues 418 to 449; sequence CPRCHVPVEKNGGCMHMKCPQPQCRLEWCWNC. Residue cysteine 431 is part of the active site. Residues cysteine 436, cysteine 441, cysteine 446, cysteine 449, cysteine 457, and histidine 461 each coordinate Zn(2+).

It belongs to the RBR family. Parkin subfamily. Forms an E3 ubiquitin ligase complex with UBE2L3 or UBE2L6. Mediates 'Lys-63'-linked polyubiquitination by associating with UBE2V1. Part of a SCF-like complex, consisting of PRKN, CUL1 and FBXW7. Interacts with SNCAIP. Binds to the C2A and C2B domains of SYT11. Interacts and regulates the turnover of SEPTIN5. Part of a complex, including STUB1, HSP70 and GPR37. The amount of STUB1 in the complex increases during ER stress. STUB1 promotes the dissociation of HSP70 from PRKN and GPR37, thus facilitating PRKN-mediated GPR37 ubiquitination. HSP70 transiently associates with unfolded GPR37 and inhibits the E3 activity of PRKN, whereas, STUB1 enhances the E3 activity of PRKN through promotion of dissociation of HSP70 from PRKN-GPR37 complexes. Interacts with PSMD4 and PACRG. Interacts with LRRK2. Interacts with RANBP2. Interacts with SUMO1 but not SUMO2, which promotes nuclear localization and autoubiquitination. Interacts (via first RING-type domain) with AIMP2 (via N-terminus). Interacts with PSMA7 and RNF41. Interacts with PINK1. Forms a complex with PINK1 and PARK7. Interacts with CHPF, the interaction with isoform 2 may facilitate PRKN transport into the mitochondria. Interacts with MFN2 (phosphorylated), promotes PRKN localization in dysfunctional depolarized mitochondria. Interacts with FBXO7; this promotes translocation to dysfunctional depolarized mitochondria. Interacts with ZNF746. Interacts with heat shock protein 70 family members, including HSPA1L, HSPA1A and HSPA8; interaction HSPA1L promotes translocation to damaged mitochondria. Interacts with BAG4 and, to a lesser extent, BAG5; interaction with BAG4 inhibits translocation to damaged mitochondria. Forms a complex with PRKN and PARK7. Interacts with AMBRA1. In terms of processing, ISGylated. Conjugated to ubiquitin-like protein ISG15 upon IFN-beta stimulation. ISGylation positively regulates its E3 ligase activity. Auto-ubiquitinates in an E2-dependent manner leading to its own degradation. Also polyubiquitinated by RNF41 for proteasomal degradation. Post-translationally, S-nitrosylated. The inhibition of PRKN ubiquitin E3 ligase activity by S-nitrosylation could contribute to the degenerative process in PD by impairing the ubiquitination of PRKN substrates. In terms of processing, phosphorylated. Activation requires phosphorylation at Ser-65 by PINK1 and binding to PINK1 phosphorylated ubiquitin. Phosphorylation at Thr-175 by PINK1 and at Thr-217 is important for mitochondrial localization. As to expression, highly expressed in the brain including the substantia nigra. Expressed in heart, testis and skeletal muscle. Expression is down-regulated or absent in tumor biopsies, and absent in the brain of PARK2 patients. Overexpression protects dopamine neurons from kainate-mediated apoptosis. Found in serum (at protein level).

The protein localises to the cytoplasm. Its subcellular location is the cytosol. The protein resides in the nucleus. It is found in the endoplasmic reticulum. It localises to the mitochondrion. The protein localises to the mitochondrion outer membrane. Its subcellular location is the cell projection. The protein resides in the neuron projection. It is found in the postsynaptic density. It localises to the presynapse. The enzyme catalyses [E2 ubiquitin-conjugating enzyme]-S-ubiquitinyl-L-cysteine + [acceptor protein]-L-lysine = [E2 ubiquitin-conjugating enzyme]-L-cysteine + [acceptor protein]-N(6)-ubiquitinyl-L-lysine.. It functions in the pathway protein modification; protein ubiquitination. With respect to regulation, in the autoinhibited state the side chain of Phe-463 inserts into a hydrophobic groove in RING-0, occluding the ubiquitin acceptor site Cys-431, whereas the REP repressor element binds RING-1 and blocks its E2-binding site. Activation of PRKN requires 2 steps: (1) phosphorylation at Ser-65 by PINK1 and (2) binding to phosphorylated ubiquitin, leading to unlock repression of the catalytic Cys-431 by the RING-0 region via an allosteric mechanism and converting PRKN to its fully-active form. According to another report, phosphorylation at Ser-65 by PINK1 is not essential for activation and only binding to phosphorylated ubiquitin is essential to unlock repression. In addition, ISG15 conjugation positively regulates its ubiquitin E3 ligase activity by suppressing the intramolecular interaction that maintains its autoinhibited conformation. Functionally, functions within a multiprotein E3 ubiquitin ligase complex, catalyzing the covalent attachment of ubiquitin moieties onto substrate proteins. Substrates include SYT11 and VDAC1. Other substrates are BCL2, CCNE1, GPR37, RHOT1/MIRO1, MFN1, MFN2, STUB1, SNCAIP, SEPTIN5, TOMM20, USP30, ZNF746, MIRO1 and AIMP2. Mediates monoubiquitination as well as 'Lys-6', 'Lys-11', 'Lys-48'-linked and 'Lys-63'-linked polyubiquitination of substrates depending on the context. Participates in the removal and/or detoxification of abnormally folded or damaged protein by mediating 'Lys-63'-linked polyubiquitination of misfolded proteins such as PARK7: 'Lys-63'-linked polyubiquitinated misfolded proteins are then recognized by HDAC6, leading to their recruitment to aggresomes, followed by degradation. Mediates 'Lys-63'-linked polyubiquitination of a 22 kDa O-linked glycosylated isoform of SNCAIP, possibly playing a role in Lewy-body formation. Mediates monoubiquitination of BCL2, thereby acting as a positive regulator of autophagy. Protects against mitochondrial dysfunction during cellular stress, by acting downstream of PINK1 to coordinate mitochondrial quality control mechanisms that remove and replace dysfunctional mitochondrial components. Depending on the severity of mitochondrial damage and/or dysfunction, activity ranges from preventing apoptosis and stimulating mitochondrial biogenesis to regulating mitochondrial dynamics and eliminating severely damaged mitochondria via mitophagy. Activation and recruitment onto the outer membrane of damaged/dysfunctional mitochondria (OMM) requires PINK1-mediated phosphorylation of both PRKN and ubiquitin. After mitochondrial damage, functions with PINK1 to mediate the decision between mitophagy or preventing apoptosis by inducing either the poly- or monoubiquitination of VDAC1, respectively; polyubiquitination of VDAC1 promotes mitophagy, while monoubiquitination of VDAC1 decreases mitochondrial calcium influx which ultimately inhibits apoptosis. When cellular stress results in irreversible mitochondrial damage, promotes the autophagic degradation of dysfunctional depolarized mitochondria (mitophagy) by promoting the ubiquitination of mitochondrial proteins such as TOMM20, RHOT1/MIRO1, MFN1 and USP30. Preferentially assembles 'Lys-6'-, 'Lys-11'- and 'Lys-63'-linked polyubiquitin chains, leading to mitophagy. The PINK1-PRKN pathway also promotes fission of damaged mitochondria by PINK1-mediated phosphorylation which promotes the PRKN-dependent degradation of mitochondrial proteins involved in fission such as MFN2. This prevents the refusion of unhealthy mitochondria with the mitochondrial network or initiates mitochondrial fragmentation facilitating their later engulfment by autophagosomes. Regulates motility of damaged mitochondria via the ubiquitination and subsequent degradation of MIRO1 and MIRO2; in motor neurons, this likely inhibits mitochondrial intracellular anterograde transport along the axons which probably increases the chance of the mitochondria undergoing mitophagy in the soma. Involved in mitochondrial biogenesis via the 'Lys-48'-linked polyubiquitination of transcriptional repressor ZNF746/PARIS which leads to its subsequent proteasomal degradation and allows activation of the transcription factor PPARGC1A. Limits the production of reactive oxygen species (ROS). Regulates cyclin-E during neuronal apoptosis. In collaboration with CHPF isoform 2, may enhance cell viability and protect cells from oxidative stress. Independently of its ubiquitin ligase activity, protects from apoptosis by the transcriptional repression of p53/TP53. May protect neurons against alpha synuclein toxicity, proteasomal dysfunction, GPR37 accumulation, and kainate-induced excitotoxicity. May play a role in controlling neurotransmitter trafficking at the presynaptic terminal and in calcium-dependent exocytosis. May represent a tumor suppressor gene. This chain is E3 ubiquitin-protein ligase parkin, found in Homo sapiens (Human).